The sequence spans 724 residues: Long-chain-fatty-acid--CoA ligase ACSBG1 (724 aa).

The segment at 1-30 (MPRNSGAGYGCPHGDPSMLDSRETPQESRQ) is disordered. A compositionally biased stretch (basic and acidic residues) spans 20-30 (DSRETPQESRQ). S53 and S56 each carry phosphoserine. Residues 282-290 (TSGTTGNPK), 472-477 (AGYGLS), D550, and R565 contribute to the ATP site. Residue Y658 is modified to Phosphotyrosine. ATP is bound at residue K701.

The protein belongs to the ATP-dependent AMP-binding enzyme family. Bubblegum subfamily. In terms of tissue distribution, expressed primarily in brain. Expressed at lower level in testis and adrenal gland. Present in all regions of brain except pituitary.

It localises to the cytoplasm. The protein localises to the cytoplasmic vesicle. The protein resides in the microsome. It is found in the endoplasmic reticulum. Its subcellular location is the cell membrane. It catalyses the reaction a long-chain fatty acid + ATP + CoA = a long-chain fatty acyl-CoA + AMP + diphosphate. It carries out the reaction (E)-hexadec-2-enoate + ATP + CoA = (2E)-hexadecenoyl-CoA + AMP + diphosphate. The enzyme catalyses hexadecanoate + ATP + CoA = hexadecanoyl-CoA + AMP + diphosphate. Functionally, catalyzes the conversion of fatty acids such as long-chain and very long-chain fatty acids to their active form acyl-CoAs for both synthesis of cellular lipids, and degradation via beta-oxidation. Can activate diverse saturated, monosaturated and polyunsaturated fatty acids. This chain is Long-chain-fatty-acid--CoA ligase ACSBG1, found in Homo sapiens (Human).